The sequence spans 115 residues: Large ribosomal subunit protein bL19 (115 aa).

Belongs to the bacterial ribosomal protein bL19 family.

Its function is as follows. This protein is located at the 30S-50S ribosomal subunit interface and may play a role in the structure and function of the aminoacyl-tRNA binding site. The protein is Large ribosomal subunit protein bL19 of Oleidesulfovibrio alaskensis (strain ATCC BAA-1058 / DSM 17464 / G20) (Desulfovibrio alaskensis).